A 1070-amino-acid polypeptide reads, in one-letter code: Carbamoyl phosphate synthase large chain (1070 aa).

Residues Met1–Glu401 are carboxyphosphate synthetic domain. Residues Arg129, Arg169, Gly175, Gly176, Lys208, Ile210, Glu215, Gly241, Ile242, His243, Gln284, and Glu298 each contribute to the ATP site. The ATP-grasp 1 domain occupies Arg133–Val327. Mg(2+)-binding residues include Gln284, Glu298, and Asn300. Mn(2+) contacts are provided by Gln284, Glu298, and Asn300. The oligomerization domain stretch occupies residues Ile402–Ser546. The carbamoyl phosphate synthetic domain stretch occupies residues Thr547–Gly929. The ATP-grasp 2 domain maps to Glu671 to Leu861. ATP is bound by residues Arg707, Arg746, Val748, Glu752, Gly777, Val778, His779, Ser780, Gln820, and Glu832. Gln820, Glu832, and Asn834 together coordinate Mg(2+). Mn(2+) contacts are provided by Gln820, Glu832, and Asn834. The 141-residue stretch at Thr930–Val1070 folds into the MGS-like domain. An allosteric domain region spans residues Thr930–Val1070.

It belongs to the CarB family. In terms of assembly, composed of two chains; the small (or glutamine) chain promotes the hydrolysis of glutamine to ammonia, which is used by the large (or ammonia) chain to synthesize carbamoyl phosphate. Tetramer of heterodimers (alpha,beta)4. Mg(2+) is required as a cofactor. It depends on Mn(2+) as a cofactor.

It catalyses the reaction hydrogencarbonate + L-glutamine + 2 ATP + H2O = carbamoyl phosphate + L-glutamate + 2 ADP + phosphate + 2 H(+). The enzyme catalyses hydrogencarbonate + NH4(+) + 2 ATP = carbamoyl phosphate + 2 ADP + phosphate + 2 H(+). The protein operates within amino-acid biosynthesis; L-arginine biosynthesis; carbamoyl phosphate from bicarbonate: step 1/1. Its pathway is pyrimidine metabolism; UMP biosynthesis via de novo pathway; (S)-dihydroorotate from bicarbonate: step 1/3. Its function is as follows. Large subunit of the glutamine-dependent carbamoyl phosphate synthetase (CPSase). CPSase catalyzes the formation of carbamoyl phosphate from the ammonia moiety of glutamine, carbonate, and phosphate donated by ATP, constituting the first step of 2 biosynthetic pathways, one leading to arginine and/or urea and the other to pyrimidine nucleotides. The large subunit (synthetase) binds the substrates ammonia (free or transferred from glutamine from the small subunit), hydrogencarbonate and ATP and carries out an ATP-coupled ligase reaction, activating hydrogencarbonate by forming carboxy phosphate which reacts with ammonia to form carbamoyl phosphate. The sequence is that of Carbamoyl phosphate synthase large chain from Listeria monocytogenes serotype 4a (strain HCC23).